The sequence spans 110 residues: UPF0213 protein DVU_3309 (110 aa).

Residues 8 to 83 enclose the GIY-YIG domain; it reads EVWFVYLLRC…KRQPTDQKLA (76 aa).

Belongs to the UPF0213 family.

The protein is UPF0213 protein DVU_3309 of Nitratidesulfovibrio vulgaris (strain ATCC 29579 / DSM 644 / CCUG 34227 / NCIMB 8303 / VKM B-1760 / Hildenborough) (Desulfovibrio vulgaris).